Consider the following 131-residue polypeptide: Gem-associated protein 7 (131 aa).

N-acetylmethionine is present on Met1. Residues 1 to 29 (MQTPVNIPVPVLRLPRGPDGFSRGFAPDG) enclose the SUZ-C domain. Thr3 carries the post-translational modification Phosphothreonine. The Sm domain maps to 65-131 (RYLRSLLAMV…SDIISYTFKP (67 aa)).

It belongs to the gemin-7 family. In terms of assembly, part of the core SMN complex that contains SMN1, GEMIN2/SIP1, DDX20/GEMIN3, GEMIN4, GEMIN5, GEMIN6, GEMIN7, GEMIN8 and STRAP/UNRIP. Part of the SMN-Sm complex that contains SMN1, GEMIN2/SIP1, DDX20/GEMIN3, GEMIN4, GEMIN5, GEMIN6, GEMIN7, GEMIN8, STRAP/UNRIP and the Sm proteins SNRPB, SNRPD1, SNRPD2, SNRPD3, SNRPE, SNRPF and SNRPG. Interacts with GEMIN6; the interaction is direct. Interacts with STRAP/UNRIP; the interaction is direct. Interacts with GEMIN8; the interaction is direct. Interacts with SNRPB, SNRPD2, SNRPD3 and SNRPE; the interaction is direct.

It localises to the nucleus. Its subcellular location is the nucleoplasm. The protein localises to the gem. The protein resides in the cytoplasm. In terms of biological role, the SMN complex catalyzes the assembly of small nuclear ribonucleoproteins (snRNPs), the building blocks of the spliceosome, and thereby plays an important role in the splicing of cellular pre-mRNAs. Most spliceosomal snRNPs contain a common set of Sm proteins SNRPB, SNRPD1, SNRPD2, SNRPD3, SNRPE, SNRPF and SNRPG that assemble in a heptameric protein ring on the Sm site of the small nuclear RNA to form the core snRNP (Sm core). In the cytosol, the Sm proteins SNRPD1, SNRPD2, SNRPE, SNRPF and SNRPG are trapped in an inactive 6S pICln-Sm complex by the chaperone CLNS1A that controls the assembly of the core snRNP. To assemble core snRNPs, the SMN complex accepts the trapped 5Sm proteins from CLNS1A forming an intermediate. Binding of snRNA inside 5Sm triggers eviction of the SMN complex, thereby allowing binding of SNRPD3 and SNRPB to complete assembly of the core snRNP. This is Gem-associated protein 7 (GEMIN7) from Homo sapiens (Human).